Here is a 360-residue protein sequence, read N- to C-terminus: MSDLATLETSILDQVAAAGDEAALEAVRVAALGKKGSISALLATLGKMSPDDRKTQGAAINQAKDKVTEALAARRDVLKSAALDARLASETIDVTLPLREAPTDAGRIHPLSQVWDELTTIFADMGFSVAEGPDIETDDYNFTKLNFPEGHPAREMHDTFFFHPKEDGSRMLLRTHTSPVQVRTMLSQKPPIRVICPGRTYRIDSDATHTPQFHQVEGLVIDKHSHLGHLKWILHEFCKAFFEVDHINMRFRPSFFPFTEPSLEVDIQCRRDKGEIRFGEGEDWLEILGCGMVHPNVLRACGIDPDEYQGFAWGMGIDRIAMLKYGIADLRQLFDSDVRWLSHYGFKPLEVPTLAGGLSS.

Glu-260 contributes to the Mg(2+) binding site.

This sequence belongs to the class-II aminoacyl-tRNA synthetase family. Phe-tRNA synthetase alpha subunit type 1 subfamily. As to quaternary structure, tetramer of two alpha and two beta subunits. Mg(2+) is required as a cofactor.

It localises to the cytoplasm. The catalysed reaction is tRNA(Phe) + L-phenylalanine + ATP = L-phenylalanyl-tRNA(Phe) + AMP + diphosphate + H(+). The protein is Phenylalanine--tRNA ligase alpha subunit of Bradyrhizobium diazoefficiens (strain JCM 10833 / BCRC 13528 / IAM 13628 / NBRC 14792 / USDA 110).